A 710-amino-acid chain; its full sequence is Tudor domain-containing protein 3 (710 aa).

Disordered regions lie at residues Lys-206 to Asn-227, Leu-288 to Ser-328, and Lys-369 to Tyr-515. The 41-residue stretch at Leu-250–Gly-290 folds into the UBA domain. 2 stretches are compositionally biased toward basic and acidic residues: residues Asp-370–Lys-400 and Met-431–Ser-451. The segment covering Leu-453–Met-471 has biased composition (polar residues). Composition is skewed to basic and acidic residues over residues Asn-480–His-490 and Lys-504–Tyr-515. Residues Ser-617 to Glu-677 form the Tudor domain. Positions Glu-678–Asn-710 are disordered. Over residues Gly-682–Pro-692 the composition is skewed to basic and acidic residues.

As to quaternary structure, component of mRNA stress granules.

The protein resides in the cytoplasm. It localises to the nucleus. Scaffolding protein that specifically recognizes and binds dimethylarginine-containing proteins. Plays a role in the regulation of translation of target mRNAs by binding Arg/Gly-rich motifs (GAR) in dimethylarginine-containing proteins. In nucleus, acts as a coactivator: recognizes and binds asymmetric dimethylation on the core histone tails associated with transcriptional activation (H3R17me2a and H4R3me2a) and recruits proteins at these arginine-methylated loci. In cytoplasm, acts as an antiviral factor that participates in the assembly of stress granules together with G3BP1. This Xenopus tropicalis (Western clawed frog) protein is Tudor domain-containing protein 3 (tdrd3).